The primary structure comprises 858 residues: Myosin-K heavy chain (858 aa).

One can recognise a Myosin motor domain in the interval 7 to 820 (SGVDDLVLVS…TIFVMEDLLM (814 aa)). 100–107 (GESGAGKT) contacts ATP. Residues 121 to 265 (SPNNSSGGGI…GGGYGGSSKT (145 aa)) form a disordered region. 2 stretches are compositionally biased toward gly residues: residues 126-139 (SGGG…GNGG) and 157-182 (RGMG…SRGG). The span at 183–228 (GPPPTRGRGGPPPPIPQNRGAPPPVSNGGAPPPVARGPVAPPPTRG) shows a compositional bias: pro residues. Residues 233 to 245 (RGGGPANRGGRGG) are compositionally biased toward gly residues. The segment at 712–722 (PHYIRCIKPND) is actin-binding. Residues 821-858 (QKIDPIGYKNRVQAYKENEKLAQMKQGKHSMKQKCLIQ) form a tail region.

It belongs to the TRAFAC class myosin-kinesin ATPase superfamily. Myosin family.

The protein resides in the cytoplasm. In terms of biological role, myosins are actin-based motor molecules with ATPase activity. Involved in phagocytosis and motility, and in the maintenance and dynamics of cell cortex. This is Myosin-K heavy chain (myoK) from Dictyostelium discoideum (Social amoeba).